The following is a 127-amino-acid chain: MNINYFVRIVPVAVVLLVGISGASMAMSLKLPNPAELSGQWRLSLQGKADDACELQLNTEAPQLTGDVACAAKWLHEPPAGWFPTPDGLALTDNQGNRLIHLNRMDEQTYEARLPGGELLILGRFAD.

An N-terminal signal peptide occupies residues 1-26 (MNINYFVRIVPVAVVLLVGISGASMA). The cysteines at positions 53 and 70 are disulfide-linked.

This sequence belongs to the protease inhibitor I38 family.

Its subcellular location is the periplasm. Its function is as follows. Inhibitor of the alkaline protease. This chain is Alkaline proteinase inhibitor (inh), found in Pseudomonas syringae pv. tomato (strain ATCC BAA-871 / DC3000).